The sequence spans 239 residues: Large ribosomal subunit protein eL32 (239 aa).

Acidic residues-rich tracts occupy residues 1–12 (MSDENDTPEELA) and 67–91 (VEADTDAEVEEVGGDDEADTDADVE). Disordered regions lie at residues 1–23 (MSDENDTPEELADISGVGPSKAE) and 64–178 (GLEV…HPSG). The span at 92-113 (TELRARGLTEKTPDLSEDEQRL) shows a compositional bias: basic and acidic residues. Basic residues predominate over residues 130-155 (YHKKKRTPTSWRRPKGTLSKQRRGIK).

The protein belongs to the eukaryotic ribosomal protein eL32 family.

This Halobacterium salinarum (strain ATCC 700922 / JCM 11081 / NRC-1) (Halobacterium halobium) protein is Large ribosomal subunit protein eL32 (rpl32e).